We begin with the raw amino-acid sequence, 144 residues long: Large ribosomal subunit protein uL11 (144 aa).

The protein belongs to the universal ribosomal protein uL11 family. Part of the ribosomal stalk of the 50S ribosomal subunit. Interacts with L10 and the large rRNA to form the base of the stalk. L10 forms an elongated spine to which L12 dimers bind in a sequential fashion forming a multimeric L10(L12)X complex. Post-translationally, one or more lysine residues are methylated.

Functionally, forms part of the ribosomal stalk which helps the ribosome interact with GTP-bound translation factors. This is Large ribosomal subunit protein uL11 from Corynebacterium glutamicum (strain R).